A 252-amino-acid polypeptide reads, in one-letter code: Probable S-methyl-5'-thioinosine phosphorylase (252 aa).

Phosphate contacts are provided by residues T8 and 44-45 (RH). M173 is a binding site for substrate. T174 lines the phosphate pocket. 197–199 (NYA) is a binding site for substrate.

The protein belongs to the PNP/MTAP phosphorylase family. MTAP subfamily. Homotrimer.

The catalysed reaction is S-methyl-5'-thioinosine + phosphate = 5-(methylsulfanyl)-alpha-D-ribose 1-phosphate + hypoxanthine. Its pathway is purine metabolism; purine nucleoside salvage. Functionally, catalyzes the reversible phosphorylation of S-methyl-5'-thioinosine (MTI) to hypoxanthine and 5-methylthioribose-1-phosphate. Involved in the breakdown of S-methyl-5'-thioadenosine (MTA), a major by-product of polyamine biosynthesis. Catabolism of (MTA) occurs via deamination to MTI and phosphorolysis to hypoxanthine. The protein is Probable S-methyl-5'-thioinosine phosphorylase of Methanocaldococcus jannaschii (strain ATCC 43067 / DSM 2661 / JAL-1 / JCM 10045 / NBRC 100440) (Methanococcus jannaschii).